A 474-amino-acid chain; its full sequence is UDP-N-acetylmuramate--L-alanine ligase (474 aa).

112–118 (GTHGKTT) is a binding site for ATP.

The protein belongs to the MurCDEF family.

It localises to the cytoplasm. The enzyme catalyses UDP-N-acetyl-alpha-D-muramate + L-alanine + ATP = UDP-N-acetyl-alpha-D-muramoyl-L-alanine + ADP + phosphate + H(+). It functions in the pathway cell wall biogenesis; peptidoglycan biosynthesis. Cell wall formation. This chain is UDP-N-acetylmuramate--L-alanine ligase, found in Cupriavidus taiwanensis (strain DSM 17343 / BCRC 17206 / CCUG 44338 / CIP 107171 / LMG 19424 / R1) (Ralstonia taiwanensis (strain LMG 19424)).